Consider the following 120-residue polypeptide: NADH dehydrogenase [ubiquinone] 1 subunit C2 (120 aa).

A helical membrane pass occupies residues 57 to 76 (GLHRQLLFVTSFVFAGYFYL).

This sequence belongs to the complex I NDUFC2 subunit family. Complex I is composed of 45 different subunits. Interacts with TMEM242.

It is found in the mitochondrion inner membrane. Accessory subunit of the mitochondrial membrane respiratory chain NADH dehydrogenase (Complex I), that is believed not to be involved in catalysis but required for the complex assembly. Complex I functions in the transfer of electrons from NADH to the respiratory chain. The immediate electron acceptor for the enzyme is believed to be ubiquinone. The sequence is that of NADH dehydrogenase [ubiquinone] 1 subunit C2 from Mus musculus (Mouse).